The sequence spans 656 residues: Nuclear elongation and deformation protein 1 (656 aa).

S99 and S103 each carry phosphoserine. Residues 99-118 (SPIVSPTTSPKQTPSINVTE) show a composition bias toward polar residues. The disordered stretch occupies residues 99–121 (SPIVSPTTSPKQTPSINVTEPQD). A Phosphothreonine modification is found at T106. Phosphoserine occurs at positions 107, 159, and 286. Disordered regions lie at residues 282-328 (VYGH…VSES) and 587-656 (SDEE…ENAV). Over residues 291 to 300 (PSRTPASPKS) the composition is skewed to low complexity. Phosphoserine occurs at positions 318, 321, and 587. Polar residues predominate over residues 318–328 (SEQSLSPVSES). The segment covering 596–609 (KSTSKSPKTPKNTK) has biased composition (low complexity). The span at 640–656 (FEGEEDEEGEEDVENAV) shows a compositional bias: acidic residues.

Belongs to the lipin family. Interacts with dis3, pim1 and nup189.

Functionally, may have a role in the maintenance of the nuclear envelope structure and in minichromosome stability. The sequence is that of Nuclear elongation and deformation protein 1 (ned1) from Schizosaccharomyces pombe (strain 972 / ATCC 24843) (Fission yeast).